Here is a 574-residue protein sequence, read N- to C-terminus: Proline--tRNA ligase (574 aa).

The protein belongs to the class-II aminoacyl-tRNA synthetase family. ProS type 1 subfamily. Homodimer.

It is found in the cytoplasm. The enzyme catalyses tRNA(Pro) + L-proline + ATP = L-prolyl-tRNA(Pro) + AMP + diphosphate. Its function is as follows. Catalyzes the attachment of proline to tRNA(Pro) in a two-step reaction: proline is first activated by ATP to form Pro-AMP and then transferred to the acceptor end of tRNA(Pro). As ProRS can inadvertently accommodate and process non-cognate amino acids such as alanine and cysteine, to avoid such errors it has two additional distinct editing activities against alanine. One activity is designated as 'pretransfer' editing and involves the tRNA(Pro)-independent hydrolysis of activated Ala-AMP. The other activity is designated 'posttransfer' editing and involves deacylation of mischarged Ala-tRNA(Pro). The misacylated Cys-tRNA(Pro) is not edited by ProRS. The chain is Proline--tRNA ligase from Pseudoalteromonas translucida (strain TAC 125).